Here is a 443-residue protein sequence, read N- to C-terminus: Carboxypeptidase M (443 aa).

A signal peptide spans 1-17 (MDFPCLWLGLLLPLVAA). A Peptidase M14 domain is found at 21-311 (NYHRQEGMEA…ASLIEYIKQV (291 aa)). N38 is a glycosylation site (N-linked (GlcNAc...) asparagine). Residues H83 and E86 each coordinate Zn(2+). N115 and N164 each carry an N-linked (GlcNAc...) asparagine glycan. 3 cysteine pairs are disulfide-bonded: C138–C285, C242–C284, and C341–C410. H190 is a Zn(2+) binding site. The active-site Proton donor/acceptor is E281. N-linked (GlcNAc...) asparagine glycosylation is found at N363 and N384. The GPI-anchor amidated serine moiety is linked to residue S423. Residues 424-443 (AATKPSLFLFLVSLLHIFFK) constitute a propeptide, removed in mature form.

The protein belongs to the peptidase M14 family. The cofactor is Zn(2+).

The protein resides in the cell membrane. It catalyses the reaction Cleavage of C-terminal arginine or lysine residues from polypeptides.. With respect to regulation, inhibited by O-phenanthroline and MGTA and activated by cobalt. Its function is as follows. Specifically removes C-terminal basic residues (Arg or Lys) from peptides and proteins. It is believed to play important roles in the control of peptide hormone and growth factor activity at the cell surface, and in the membrane-localized degradation of extracellular proteins. In Homo sapiens (Human), this protein is Carboxypeptidase M (CPM).